Here is a 78-residue protein sequence, read N- to C-terminus: Protein Vpr (78 aa).

The tract at residues 1 to 42 is homooligomerization; that stretch reads MEQAPEDQGPQREPHNEWTLELLEELKNEAVRHFPRIWLHGL.

It belongs to the HIV-1 VPR protein family. In terms of assembly, homooligomer, may form homodimer. Interacts with p6-gag region of the Pr55 Gag precursor protein through a (Leu-X-X)4 motif near the C-terminus of the P6gag protein. Interacts with host UNG. May interact with host RAD23A/HHR23A. Interacts with host VPRBP/DCAF1, leading to hijack the CUL4A-RBX1-DDB1-DCAF1/VPRBP complex, mediating ubiquitination of host proteins such as TERT and ZGPAT and arrest of the cell cycle in G2 phase. Phosphorylated on several residues by host. These phosphorylations regulate VPR activity for the nuclear import of the HIV-1 pre-integration complex.

Its subcellular location is the virion. It is found in the host nucleus. The protein resides in the host extracellular space. Its function is as follows. During virus replication, may deplete host UNG protein, and incude G2-M cell cycle arrest. Acts by targeting specific host proteins for degradation by the 26S proteasome, through association with the cellular CUL4A-DDB1 E3 ligase complex by direct interaction with host VPRPB/DCAF-1. Cell cycle arrest reportedly occurs within hours of infection and is not blocked by antiviral agents, suggesting that it is initiated by the VPR carried into the virion. Additionally, VPR induces apoptosis in a cell cycle dependent manner suggesting that these two effects are mechanistically linked. Detected in the serum and cerebrospinal fluid of AIDS patient, VPR may also induce cell death to bystander cells. During virus entry, plays a role in the transport of the viral pre-integration (PIC) complex to the host nucleus. This function is crucial for viral infection of non-dividing macrophages. May act directly at the nuclear pore complex, by binding nucleoporins phenylalanine-glycine (FG)-repeat regions. This is Protein Vpr from Human immunodeficiency virus type 1 group M subtype B (isolate PCV12) (HIV-1).